A 202-amino-acid chain; its full sequence is Transcription antitermination protein NusB (202 aa).

Residues 1–11 (MTEERTADNKA) show a composition bias toward basic and acidic residues. Disordered stretches follow at residues 1–21 (MTEERTADNKAAKAASFKRHG) and 169–202 (SAAKRAEQAEQPGQAESDELDGLLDGVVQESDEA).

Belongs to the NusB family.

Involved in transcription antitermination. Required for transcription of ribosomal RNA (rRNA) genes. Binds specifically to the boxA antiterminator sequence of the ribosomal RNA (rrn) operons. This is Transcription antitermination protein NusB from Corynebacterium jeikeium (strain K411).